Consider the following 144-residue polypeptide: Large ribosomal subunit protein uL15 (144 aa).

Basic and acidic residues predominate over residues 1–14; that stretch reads MKLHELKPNEGARD. The interval 1–43 is disordered; it reads MKLHELKPNEGARDVRKRVGRGTSSGTGKTAGRGQKGQKARSK. Residues 23-35 show a composition bias toward gly residues; the sequence is TSSGTGKTAGRGQ.

It belongs to the universal ribosomal protein uL15 family. As to quaternary structure, part of the 50S ribosomal subunit.

In terms of biological role, binds to the 23S rRNA. This is Large ribosomal subunit protein uL15 from Latilactobacillus sakei subsp. sakei (strain 23K) (Lactobacillus sakei subsp. sakei).